A 446-amino-acid chain; its full sequence is MRPVRENSSGARSPRVPADLARSILISLPFPPDSLAHRPPSSAPTESQGLFTVAAPAPGAPSPPATLAHLLPAPAMYSLLETELKNPVGTPTQAAGTGGPAAPGGAGKSSANAAGGANSGGGSSGGASGGGGGTDQDRVKRPMNAFMVWSRGQRRKMALENPKMHNSEISKRLGADWKLLTDAEKRPFIDEAKRLRAVHMKEYPDYKYRPRRKTKTLLKKDKYSLPSGLLPPGAAAAAAAAAAAAAAASSPVGVGQRLDTYTHVNGWANGAYSLVQEQLGYAQPPSMSSPPPPPALPPMHRYDMAGLQYSPMMPPGAQSYMNVAAAAAAASGYGGMAPSATAAAAAAYGQQPATAAAAAAAAAAMSLGPMGSVVKSEPSSPPPAIASHSQRACLGDLRDMISMYLPPGGDAADAASPLPGGRLHGVHQHYQGAGTAVNGTVPLTHI.

2 disordered regions span residues 29 to 48 and 87 to 140; these read PFPP…TESQ and PVGT…DRVK. 2 stretches are compositionally biased toward gly residues: residues 96–107 and 117–134; these read GTGGPAAPGGAG and ANSG…GGGT. The HMG box DNA-binding region spans 139-207; the sequence is VKRPMNAFMV…VHMKEYPDYK (69 aa). The 9aaTAD signature appears at 399-407; it reads DMISMYLPP.

Interacts with SOX2 and FGFR1.

The protein resides in the nucleus. Functionally, transcription factor required during the formation of the hypothalamo-pituitary axis. May function as a switch in neuronal development. Keeps neural cells undifferentiated by counteracting the activity of proneural proteins and suppresses neuronal differentiation. Required also within the pharyngeal epithelia for craniofacial morphogenesis. Controls a genetic switch in male development. Is necessary for initiating male sex determination by directing the development of supporting cell precursors (pre-Sertoli cells) as Sertoli rather than granulosa cells. The protein is Transcription factor SOX-3 (SOX3) of Homo sapiens (Human).